A 191-amino-acid polypeptide reads, in one-letter code: Small ribosomal subunit protein bS6 (191 aa).

Residues 168-191 are disordered; it reads KVNLTRKPTPNKSSENKQKVEKQA. The segment covering 181 to 191 has biased composition (basic and acidic residues); the sequence is SENKQKVEKQA.

This sequence belongs to the bacterial ribosomal protein bS6 family.

Its function is as follows. Binds together with bS18 to 16S ribosomal RNA. The chain is Small ribosomal subunit protein bS6 from Mycoplasmoides gallisepticum (strain R(low / passage 15 / clone 2)) (Mycoplasma gallisepticum).